The chain runs to 180 residues: Probable Brix domain-containing ribosomal biogenesis protein (180 aa).

The Brix domain occupies 1-178; it reads MTTSRRPSPR…KPAEMVKRGR (178 aa).

In terms of biological role, probably involved in the biogenesis of the ribosome. The protein is Probable Brix domain-containing ribosomal biogenesis protein of Aeropyrum pernix (strain ATCC 700893 / DSM 11879 / JCM 9820 / NBRC 100138 / K1).